The following is a 119-amino-acid chain: Non-specific lipid-transfer protein 3 (119 aa).

Residues 1-24 form the signal peptide; sequence MARSMKLACVVLAMCMLVAPMAEA. Intrachain disulfides connect Cys-28-Cys-77, Cys-38-Cys-54, Cys-55-Cys-100, and Cys-75-Cys-114.

Belongs to the plant LTP family. As to expression, expressed in roots, stem, leaves and tendrils of the mature plant.

Its function is as follows. Plant non-specific lipid-transfer proteins transfer phospholipids as well as galactolipids across membranes. May play a role in wax or cutin deposition in the cell walls of expanding epidermal cells and certain secretory tissues. The polypeptide is Non-specific lipid-transfer protein 3 (Pisum sativum (Garden pea)).